Reading from the N-terminus, the 442-residue chain is Protein PRRC1-A (442 aa).

The tract at residues 1–27 (MMEESGIETTPPSTPPPSTIGTSVPAA) is disordered.

It belongs to the PRRC1 family.

It localises to the golgi apparatus. In Xenopus laevis (African clawed frog), this protein is Protein PRRC1-A (prrc1-a).